The sequence spans 160 residues: Probable chemoreceptor glutamine deamidase CheD 1 (160 aa).

Belongs to the CheD family.

It catalyses the reaction L-glutaminyl-[protein] + H2O = L-glutamyl-[protein] + NH4(+). Its function is as follows. Probably deamidates glutamine residues to glutamate on methyl-accepting chemotaxis receptors (MCPs), playing an important role in chemotaxis. The polypeptide is Probable chemoreceptor glutamine deamidase CheD 1 (Syntrophus aciditrophicus (strain SB)).